Reading from the N-terminus, the 516-residue chain is Maturase K (516 aa).

Belongs to the intron maturase 2 family. MatK subfamily.

The protein resides in the plastid. It localises to the chloroplast. Usually encoded in the trnK tRNA gene intron. Probably assists in splicing its own and other chloroplast group II introns. The protein is Maturase K of Colchicum speciosum (Giant meadow saffron).